We begin with the raw amino-acid sequence, 102 residues long: Small ribosomal subunit protein uS10 (102 aa).

This sequence belongs to the universal ribosomal protein uS10 family. Part of the 30S ribosomal subunit.

In terms of biological role, involved in the binding of tRNA to the ribosomes. This Staphylococcus aureus (strain Mu3 / ATCC 700698) protein is Small ribosomal subunit protein uS10.